A 451-amino-acid polypeptide reads, in one-letter code: Glutamyl-tRNA reductase (451 aa).

Residues 47–50 (TCNR), Ser-132, 137–139 (EPQ), and Gln-143 each bind substrate. The active-site Nucleophile is the Cys-48. 212-217 (AAGEMN) is a binding site for NADP(+).

It belongs to the glutamyl-tRNA reductase family. Homodimer.

The catalysed reaction is (S)-4-amino-5-oxopentanoate + tRNA(Glu) + NADP(+) = L-glutamyl-tRNA(Glu) + NADPH + H(+). It participates in porphyrin-containing compound metabolism; protoporphyrin-IX biosynthesis; 5-aminolevulinate from L-glutamyl-tRNA(Glu): step 1/2. Catalyzes the NADPH-dependent reduction of glutamyl-tRNA(Glu) to glutamate 1-semialdehyde (GSA). The protein is Glutamyl-tRNA reductase of Psychrobacter sp. (strain PRwf-1).